The chain runs to 54 residues: Ovomucoid (54 aa).

In terms of domain architecture, Kazal-like spans 4 to 54 (VNCSDYPKPVCSLLYMPLCGSDNKTYGNKCNFCNAVADSNGTLTLSHFGKC). Cystine bridges form between Cys-6/Cys-36, Cys-14/Cys-33, and Cys-22/Cys-54. The N-linked (GlcNAc...) asparagine glycan is linked to Asn-43.

Its subcellular location is the secreted. The polypeptide is Ovomucoid (Geococcyx californianus (Greater roadrunner)).